A 396-amino-acid polypeptide reads, in one-letter code: MTEHNVRNFNINFGPQHPAAHGVLRLVLELDGEIVERVDPHIGLLHRGTEKLIETKTYLQAVPYFDRLDYVAPMNQEHAYAMAVEKLLGIEIPIRGQLIRVLYSEIGRILSHLLNVTTQAMDVGALTPPLWGFEEREKLMVFYERASGSRMHAAYFRPGGVHQDLPEQLVQDIGAWCDPFLKALDDIDNLLTGNRIFKQRNVDIGVVSLDECWAWGFSGVMVRGSGAAWDLRRAQPYECYSDLEFDIPIGKNGDNYDRYLIRMIEMRESVRIMKQCVNRLLSDAKTGPFSSIDGKVVPPKRGEMKRSMEALIHHFKLYTEGYHVPAGEVYAAVEAPKGEFGVYLVSDGTNKPYRCKIRAPGYAHLQAMDFMCRGHQLADVAAVLGSLDIVFGEVDR.

The protein belongs to the complex I 49 kDa subunit family. NDH-1 is composed of 14 different subunits. Subunits NuoB, C, D, E, F, and G constitute the peripheral sector of the complex.

Its subcellular location is the cell inner membrane. It carries out the reaction a quinone + NADH + 5 H(+)(in) = a quinol + NAD(+) + 4 H(+)(out). Functionally, NDH-1 shuttles electrons from NADH, via FMN and iron-sulfur (Fe-S) centers, to quinones in the respiratory chain. The immediate electron acceptor for the enzyme in this species is believed to be ubiquinone. Couples the redox reaction to proton translocation (for every two electrons transferred, four hydrogen ions are translocated across the cytoplasmic membrane), and thus conserves the redox energy in a proton gradient. The sequence is that of NADH-quinone oxidoreductase subunit D from Rhizobium johnstonii (strain DSM 114642 / LMG 32736 / 3841) (Rhizobium leguminosarum bv. viciae).